The following is a 240-amino-acid chain: Ribonuclease T2 (240 aa).

The N-terminal stretch at 1–19 is a signal peptide; that stretch reads MRFIAFAVIFSAVYLCSSA. Cys-41 and Cys-46 are joined by a disulfide. His-56 is a catalytic residue. Disulfide bonds link Cys-66–Cys-110, Cys-173–Cys-227, and Cys-191–Cys-201. Asn-67 and Asn-73 each carry an N-linked (GlcNAc...) asparagine glycan. Catalysis depends on residues Glu-103 and His-107.

It belongs to the RNase T2 family. As to expression, ubiquitous.

Its subcellular location is the lysosome lumen. It is found in the endoplasmic reticulum lumen. It localises to the secreted. The enzyme catalyses a ribonucleotidyl-ribonucleotide-RNA + H2O = a 3'-end 3'-phospho-ribonucleotide-RNA + a 5'-end dephospho-ribonucleoside-RNA + H(+). Its function is as follows. Has ribonuclease activity, with higher activity at acidic pH. Probably is involved in lysosomal degradation of ribosomal RNA. The protein is Ribonuclease T2 (rnaset2) of Danio rerio (Zebrafish).